The primary structure comprises 465 residues: Ribosomal protein uS12 methylthiotransferase RimO (465 aa).

Residues 1-117 enclose the MTTase N-terminal domain; it reads MKVGFISLGC…IVDICEGMPP (117 aa). Residues cysteine 10, cysteine 46, cysteine 80, cysteine 150, cysteine 154, and cysteine 157 each coordinate [4Fe-4S] cluster. The region spanning 136–369 is the Radical SAM core domain; sequence ATPRHFAYMK…AIQRKIARAR (234 aa). One can recognise a TRAM domain in the interval 371 to 442; the sequence is RGLVGKEVPV…DYDVVGTLLA (72 aa).

The protein belongs to the methylthiotransferase family. RimO subfamily. Requires [4Fe-4S] cluster as cofactor.

It is found in the cytoplasm. The catalysed reaction is L-aspartate(89)-[ribosomal protein uS12]-hydrogen + (sulfur carrier)-SH + AH2 + 2 S-adenosyl-L-methionine = 3-methylsulfanyl-L-aspartate(89)-[ribosomal protein uS12]-hydrogen + (sulfur carrier)-H + 5'-deoxyadenosine + L-methionine + A + S-adenosyl-L-homocysteine + 2 H(+). Catalyzes the methylthiolation of an aspartic acid residue of ribosomal protein uS12. The protein is Ribosomal protein uS12 methylthiotransferase RimO of Solibacter usitatus (strain Ellin6076).